A 455-amino-acid polypeptide reads, in one-letter code: Hydroxymethylglutaryl-CoA synthase 2 (455 aa).

Glutamate 86 (proton donor/acceptor) is an active-site residue. The active-site Acyl-thioester intermediate is cysteine 120. (3S)-3-hydroxy-3-methylglutaryl-CoA contacts are provided by cysteine 120, threonine 161, serine 211, histidine 255, lysine 264, asparagine 329, and serine 363. Histidine 255 acts as the Proton donor/acceptor in catalysis.

The protein belongs to the thiolase-like superfamily. HMG-CoA synthase family.

The catalysed reaction is acetoacetyl-CoA + acetyl-CoA + H2O = (3S)-3-hydroxy-3-methylglutaryl-CoA + CoA + H(+). It participates in metabolic intermediate biosynthesis; (R)-mevalonate biosynthesis; (R)-mevalonate from acetyl-CoA: step 2/3. In terms of biological role, this enzyme condenses acetyl-CoA with acetoacetyl-CoA to form HMG-CoA, which is the substrate for HMG-CoA reductase. In Blattella germanica (German cockroach), this protein is Hydroxymethylglutaryl-CoA synthase 2 (HMGCS-2).